Reading from the N-terminus, the 671-residue chain is Annexin A6 (671 aa).

8 Annexin repeats span residues 18-89, 90-161, 173-245, 249-320, 361-432, 433-504, 519-594, and 598-669; these read FNAS…SLMR, PPAY…VLLQ, DLVE…AVVK, STAE…KLCE, FNDD…GLML, TPAQ…SLAL, EDAK…AIVR, and NKPA…LCGG.

This sequence belongs to the annexin family.

The protein resides in the cytoplasm. It is found in the melanosome. May associate with CD21. May regulate the release of Ca(2+) from intracellular stores. In Gallus gallus (Chicken), this protein is Annexin A6 (ANXA6).